Reading from the N-terminus, the 467-residue chain is Ribosomal protein uS12 methylthiotransferase RimO (467 aa).

Residues 1 to 110 form the MTTase N-terminal domain; sequence MDLHGCAKNQ…LPQLIDSMFP (110 aa). [4Fe-4S] cluster is bound by residues cysteine 6, cysteine 42, cysteine 73, cysteine 153, cysteine 157, and cysteine 160. A Radical SAM core domain is found at 139–386; that stretch reads LNFPRSTYIK…QNAQTSITEK (248 aa). Residues 389 to 467 form the TRAM domain; sequence DSFIGKEIEV…NGFDLEAVAV (79 aa).

This sequence belongs to the methylthiotransferase family. RimO subfamily. [4Fe-4S] cluster serves as cofactor.

It is found in the cytoplasm. The catalysed reaction is L-aspartate(89)-[ribosomal protein uS12]-hydrogen + (sulfur carrier)-SH + AH2 + 2 S-adenosyl-L-methionine = 3-methylsulfanyl-L-aspartate(89)-[ribosomal protein uS12]-hydrogen + (sulfur carrier)-H + 5'-deoxyadenosine + L-methionine + A + S-adenosyl-L-homocysteine + 2 H(+). Catalyzes the methylthiolation of an aspartic acid residue of ribosomal protein uS12. In Treponema denticola (strain ATCC 35405 / DSM 14222 / CIP 103919 / JCM 8153 / KCTC 15104), this protein is Ribosomal protein uS12 methylthiotransferase RimO.